A 901-amino-acid chain; its full sequence is Protein translocase subunit SecA (901 aa).

ATP-binding positions include Gln87, 105–109 (GEGKT), and Asp512. The disordered stretch occupies residues 852 to 901 (AQMQQLSHQDDDSAAAAALAAQTGDRKVGRNDPCPCGSGKKYKQCHGRLS). Zn(2+)-binding residues include Cys885, Cys887, Cys896, and His897. The span at 891–901 (KKYKQCHGRLS) shows a compositional bias: basic residues.

Belongs to the SecA family. In terms of assembly, monomer and homodimer. Part of the essential Sec protein translocation apparatus which comprises SecA, SecYEG and auxiliary proteins SecDF-YajC and YidC. Zn(2+) is required as a cofactor.

The protein resides in the cell inner membrane. The protein localises to the cytoplasm. The enzyme catalyses ATP + H2O + cellular proteinSide 1 = ADP + phosphate + cellular proteinSide 2.. In terms of biological role, part of the Sec protein translocase complex. Interacts with the SecYEG preprotein conducting channel. Has a central role in coupling the hydrolysis of ATP to the transfer of proteins into and across the cell membrane, serving both as a receptor for the preprotein-SecB complex and as an ATP-driven molecular motor driving the stepwise translocation of polypeptide chains across the membrane. This Citrobacter koseri (strain ATCC BAA-895 / CDC 4225-83 / SGSC4696) protein is Protein translocase subunit SecA.